A 634-amino-acid polypeptide reads, in one-letter code: Phototropic-responsive NPH3 family protein NPY2 (634 aa).

One can recognise a BTB domain in the interval 29–97 (SDISVDVEGS…CYGMTVTLSA (69 aa)). In terms of domain architecture, NPH3 spans 207–488 (DWWVEDLCEL…VQVLFFEQVR (282 aa)). A Phosphotyrosine modification is found at tyrosine 429. Disordered stretches follow at residues 492–517 (SSGS…YGSS) and 584–634 (QLQS…VSVS). The segment covering 588–602 (KGGGEKNNGGGGGGS) has biased composition (gly residues). The span at 619–634 (KTATPSRNLTRRVSVS) shows a compositional bias: polar residues.

This sequence belongs to the NPH3 family. Specifically expressed in the hypophysis and the root meristems in the embryos. Highly expressed in primary root tips and radicles.

Its subcellular location is the cell membrane. The protein resides in the cytoplasm. It is found in the cytosol. It participates in protein modification; protein ubiquitination. In terms of biological role, may act as a substrate-specific adapter of an E3 ubiquitin-protein ligase complex (CUL3-RBX1-BTB) which mediates the ubiquitination and subsequent proteasomal degradation of target proteins. Plays an essential role in auxin-mediated organogenesis and in root gravitropic responses through the control of PIN proteins (e.g. PIN1 and PIN2) polarity in the root tip endodermal cell layer and in shoot epidermis. Recruited to the plasma membrane by PINs (e.g. PIN1 and PIN2) and, in concert with AGC kinases-mediated (e.g. D6PK and PID) PINs phosphorylation, maintains their polarity through limiting lateral diffusion-based escape. The protein is Phototropic-responsive NPH3 family protein NPY2 of Arabidopsis thaliana (Mouse-ear cress).